We begin with the raw amino-acid sequence, 177 residues long: Thymidine kinase (177 aa).

Residue 11–18 coordinates ATP; it reads GPMFSGKS. The active-site Proton acceptor is the E83. F113 provides a ligand contact to substrate. C138 and C141 together coordinate Zn(2+). 157 to 161 contacts substrate; the sequence is IELIG. Zn(2+) contacts are provided by C170 and C173.

It belongs to the thymidine kinase family.

It carries out the reaction thymidine + ATP = dTMP + ADP + H(+). This Sheeppox virus (strain KS-1) (SPPV) protein is Thymidine kinase (TK).